Reading from the N-terminus, the 262-residue chain is Dihydroorotate dehydrogenase B (NAD(+)), electron transfer subunit (262 aa).

Residues 3–104 (KLQEMMTIVS…MGPLGNGFPV (102 aa)) enclose the FAD-binding FR-type domain. FAD is bound by residues 53–56 (RPIS), 70–72 (LYR), and 79–80 (GT). [2Fe-2S] cluster-binding residues include Cys-226, Cys-231, Cys-234, and Cys-249.

It belongs to the PyrK family. Heterotetramer of 2 PyrK and 2 PyrD type B subunits. [2Fe-2S] cluster is required as a cofactor. The cofactor is FAD.

It participates in pyrimidine metabolism; UMP biosynthesis via de novo pathway; orotate from (S)-dihydroorotate (NAD(+) route): step 1/1. Responsible for channeling the electrons from the oxidation of dihydroorotate from the FMN redox center in the PyrD type B subunit to the ultimate electron acceptor NAD(+). In Lactococcus lactis subsp. lactis (strain IL1403) (Streptococcus lactis), this protein is Dihydroorotate dehydrogenase B (NAD(+)), electron transfer subunit.